A 75-amino-acid polypeptide reads, in one-letter code: Mitotic-spindle organizing protein 1 (75 aa).

It belongs to the MOZART1 family. Part of the gamma-tubulin complex.

It is found in the cytoplasm. The protein resides in the cytoskeleton. Its subcellular location is the microtubule organizing center. It localises to the centrosome. The protein localises to the spindle. Functionally, required for gamma-tubulin complex recruitment to the centrosome. This chain is Mitotic-spindle organizing protein 1 (mzt1), found in Danio rerio (Zebrafish).